Reading from the N-terminus, the 242-residue chain is MPSCDGNALVIFSGGQDSTTCLGWALNRFRTVATIGFHYGQRHDVEMQCRQDVLAAIGDVRPGWKAHLGTDTVVEMGLFRELGETALTHDVAIEMGRNGLPSTFVPGRNLMFLTAAAACAYRQGIRHLVLGVCETDFSGYPDCRDDAMKAMQVALNLGMESRFVVHTPLMWLTKAQTWDMARDEGGQDFVELVLERSHTCYKGVRDVRHPWGYGCGTCPACELRRAGWDAYVAGHAVHGEGR.

ATP is bound at residue 12 to 22 (FSGGQDSTTCL). Zn(2+) is bound by residues Cys200, Cys215, Cys218, and Cys221.

It belongs to the QueC family. It depends on Zn(2+) as a cofactor.

The enzyme catalyses 7-carboxy-7-deazaguanine + NH4(+) + ATP = 7-cyano-7-deazaguanine + ADP + phosphate + H2O + H(+). The protein operates within purine metabolism; 7-cyano-7-deazaguanine biosynthesis. Its function is as follows. Catalyzes the ATP-dependent conversion of 7-carboxy-7-deazaguanine (CDG) to 7-cyano-7-deazaguanine (preQ(0)). The chain is 7-cyano-7-deazaguanine synthase from Nitratidesulfovibrio vulgaris (strain ATCC 29579 / DSM 644 / CCUG 34227 / NCIMB 8303 / VKM B-1760 / Hildenborough) (Desulfovibrio vulgaris).